The sequence spans 906 residues: Cadherin-2 (906 aa).

An N-terminal signal peptide occupies residues 1-25 (MCRIVGAPRTLLPLLAALLQASVDA). Residues 26–159 (SGEISLCKTG…HNGYLQRQKR (134 aa)) constitute a propeptide that is removed on maturation. A phosphoserine mark is found at Ser-96 and Ser-135. 5 consecutive Cadherin domains span residues 160 to 267 (DWVI…RPEF), 268 to 392 (LHQV…GEVP), 393 to 497 (ENRV…NPYF), 498 to 603 (APNP…DNAP), and 604 to 714 (QVLP…DVDR). Topologically, residues 160-724 (DWVIPPINLP…IVGAGLGTGA (565 aa)) are extracellular. Glu-170 contacts Ca(2+). An N-linked (GlcNAc...) asparagine glycan is attached at Asn-190. Residues Asp-226, Glu-228, Asp-259, Met-260, Asn-261, Asp-262, and Asn-263 each contribute to the Ca(2+) site. Asn-273 carries an N-linked (GlcNAc...) asparagine glycan. The Ca(2+) site is built by Asp-293, Asp-295, and Asn-301. A glycan (N-linked (GlcNAc...) asparagine) is linked at Asn-325. Asp-353 contributes to the Ca(2+) binding site. N-linked (GlcNAc...) asparagine glycosylation is found at Asn-357, Asn-402, Asn-572, Asn-622, Asn-651, and Asn-692. A helical membrane pass occupies residues 725 to 746 (IIAILLCIIILLILVLMFVVWM). At 747 to 906 (KRRDKERQAK…LADMYGGGDD (160 aa)) the chain is on the cytoplasmic side. Low complexity predominate over residues 863 to 880 (SGSTAGSLSSLNSSSSGG). The segment at 863 to 884 (SGSTAGSLSSLNSSSSGGEQDY) is disordered.

As to quaternary structure, homodimer (via extracellular region). Can also form heterodimers with other cadherins (via extracellular region). Dimerization occurs in trans, i.e. with a cadherin chain from another cell. Interacts with CDCP1. Interacts with PCDH8; this complex may also include TAOK2. The interaction with PCDH8 may lead to internalization through TAOK2/p38 MAPK pathway. Identified in a complex containing FGFR4, NCAM1, CDH2, PLCG1, FRS2, SRC, SHC1, GAP43 and CTTN. May interact with OBSCN (via protein kinase domain 2). Interacts with FBXO45. Post-translationally, cleaved by MMP24. Ectodomain cleavage leads to the generation of a soluble 90 kDa N-terminal soluble fragment and a 45 kDa membrane-bound C-terminal fragment 1 (CTF1), which is further cleaved by gamma-secretase into a 35 kDa. Cleavage in neural stem cells by MMP24 affects CDH2-mediated anchorage of neural stem cells to ependymocytes in the adult subependymal zone, leading to modulate neural stem cell quiescence. May be phosphorylated by OBSCN. As to expression, detected in liver, kidney, heart and brain capillaries.

It localises to the cell membrane. The protein localises to the sarcolemma. Its subcellular location is the cell junction. It is found in the cell surface. The protein resides in the desmosome. It localises to the adherens junction. Functionally, calcium-dependent cell adhesion protein; preferentially mediates homotypic cell-cell adhesion by dimerization with a CDH2 chain from another cell. Cadherins may thus contribute to the sorting of heterogeneous cell types. Acts as a regulator of neural stem cells quiescence by mediating anchorage of neural stem cells to ependymocytes in the adult subependymal zone: upon cleavage by MMP24, CDH2-mediated anchorage is affected, leading to modulate neural stem cell quiescence. Plays a role in cell-to-cell junction formation between pancreatic beta cells and neural crest stem (NCS) cells, promoting the formation of processes by NCS cells. Required for proper neurite branching. Required for pre- and postsynaptic organization. CDH2 may be involved in neuronal recognition mechanism. In hippocampal neurons, may regulate dendritic spine density. This Bos taurus (Bovine) protein is Cadherin-2 (CDH2).